Consider the following 379-residue polypeptide: LIM/homeobox protein Lhx9 (379 aa).

LIM zinc-binding domains are found at residues Thr51–Val112 and Gln113–Gly175. Disordered stretches follow at residues Glu232–Lys257 and Arg310–Phe379. The span at Lys248–Lys257 shows a compositional bias: basic residues. A DNA-binding region (homeobox) is located at residues Thr249 to Leu308. The span at Ala326 to Phe379 shows a compositional bias: polar residues.

As to expression, isoform 1 and isoform 3 are expressed in ovary, testis, brain and heart. Isoform 4 and isoform 5 are expressed in brain.

It is found in the nucleus. Functionally, may be involved in gonadal development. This chain is LIM/homeobox protein Lhx9 (lhx9), found in Glandirana rugosa (Japanese wrinkled frog).